The sequence spans 571 residues: Proline--tRNA ligase (571 aa).

Belongs to the class-II aminoacyl-tRNA synthetase family. ProS type 1 subfamily. In terms of assembly, homodimer.

It localises to the cytoplasm. It carries out the reaction tRNA(Pro) + L-proline + ATP = L-prolyl-tRNA(Pro) + AMP + diphosphate. Functionally, catalyzes the attachment of proline to tRNA(Pro) in a two-step reaction: proline is first activated by ATP to form Pro-AMP and then transferred to the acceptor end of tRNA(Pro). As ProRS can inadvertently accommodate and process non-cognate amino acids such as alanine and cysteine, to avoid such errors it has two additional distinct editing activities against alanine. One activity is designated as 'pretransfer' editing and involves the tRNA(Pro)-independent hydrolysis of activated Ala-AMP. The other activity is designated 'posttransfer' editing and involves deacylation of mischarged Ala-tRNA(Pro). The misacylated Cys-tRNA(Pro) is not edited by ProRS. This Shewanella baltica (strain OS185) protein is Proline--tRNA ligase.